A 1248-amino-acid chain; its full sequence is Structural polyprotein (1248 aa).

Residues 1 to 10 (MEFIPTQTFY) show a composition bias toward polar residues. The disordered stretch occupies residues 1-104 (MEFIPTQTFY…KKKKPGRRER (104 aa)). Over residues 22 to 44 (RPTIQVIRPRPRPQRQAGQLAQL) the composition is skewed to low complexity. Positions 36–68 (RQAGQLAQLISAVNKLTMRAVPQQKPRRNRKNK) are host transcription inhibition. Basic residues predominate over residues 60 to 72 (KPRRNRKNKKQKQ). A Nuclear localization signal motif is present at residues 61–99 (PRRNRKNKKQKQKQQAPQNNTNQKKQPPKKKPAQKKKKP). The span at 73–85 (KQQAPQNNTNQKK) shows a compositional bias: low complexity. The tract at residues 84 to 114 (KKQPPKKKPAQKKKKPGRRERMCMKIENDCI) is binding to the viral RNA. The span at 86–101 (QPPKKKPAQKKKKPGR) shows a compositional bias: basic residues. The ribosome-binding stretch occupies residues 99–113 (PGRRERMCMKIENDC). Cys-113 and Cys-128 form a disulfide bridge. Positions 113–261 (CIFEVKHEGK…KITPEGAEEW (149 aa)) constitute a Peptidase S3 domain. The active-site Charge relay system is His-139. A Nuclear export signal motif is present at residues 144–154 (IDNADLAKLAF). Residues 155–160 (KRSSKY) are interaction with spike glycoprotein E2. Asp-161 (charge relay system) is an active-site residue. The tract at residues 183–193 (PEGYYNWHHGA) is dimerization of the capsid protein. Catalysis depends on Ser-213, which acts as the Charge relay system. The segment at 219–223 (DNKGR) is dimerization of the capsid protein. The functions as an uncleaved signal peptide for the precursor of protein E3/E2 stretch occupies residues 262–274 (SLAIPVMCLLANT). The Extracellular portion of the chain corresponds to 262–692 (SLAIPVMCLL…YYYELYPTMT (431 aa)). Intrachain disulfides connect Cys-269–Cys-278, Cys-283–Cys-287, Cys-286–Cys-318, Cys-344–Cys-450, Cys-347–Cys-353, Cys-416–Cys-430, Cys-478–Cys-591, Cys-526–Cys-550, and Cys-528–Cys-545. An N-linked (GlcNAc...) asparagine; by host glycan is attached at Asn-273. Interaction with host Mxra8 receptor regions lie at residues 351–354 (HSCH) and 387–389 (HDW). Interaction with host Mxra8 receptor regions lie at residues 509–512 (QSGN) and 541–547 (VINNCKV). Asn-588 and Asn-670 each carry an N-linked (GlcNAc...) asparagine; by host glycan. The helical transmembrane segment at 693–713 (VVVVSVASFILLSMVGMAVGM) threads the bilayer. At 714–748 (CMCARRRCITPYELTPGATVPFLLSLICCIRTAKA) the chain is on the cytoplasmic side. The segment at 716–720 (CARRR) is interaction with the capsid protein. Residues Cys-721, Cys-741, and Cys-742 are each lipidated (S-palmitoyl cysteine; by host). Positions 721 to 741 (CITPYELTPGATVPFLLSLIC) are transient transmembrane before p62-6K protein processing. A disulfide bridge connects residues Cys-721 and Cys-742. Topologically, residues 749 to 763 (ATYQEAAVYLWNEQQ) are extracellular. Residues 764-784 (PLFWLQALIPLAALIVLCNCL) form a helical membrane-spanning segment. The Cytoplasmic segment spans residues 785 to 795 (RLLPCCCKTLA). The helical transmembrane segment at 796 to 816 (FLAVMSIGAHTVSAYEHVTVI) threads the bilayer. Residues 817–1224 (PNTVGVPYKT…AMSWVQKITG (408 aa)) are Extracellular-facing. 4 disulfides stabilise this stretch: Cys-858–Cys-923, Cys-871–Cys-903, Cys-872–Cys-905, and Cys-877–Cys-887. An E1 fusion peptide loop region spans residues 893–910 (VYPFMWGGAYCFCDAENT). N-linked (GlcNAc...) asparagine; by host glycosylation is found at Asn-950 and Asn-1079. 4 cysteine pairs are disulfide-bonded: Cys-1068–Cys-1080, Cys-1110–Cys-1185, Cys-1115–Cys-1189, and Cys-1137–Cys-1179. Residues 1225 to 1245 (GVGLVVAVAALILIVVLCVSF) form a helical membrane-spanning segment. Cys-1242 carries S-palmitoyl cysteine; by host lipidation. Cys-1242 carries the S-stearoyl cysteine; by host lipid modification. Residues 1246–1248 (SRH) lie on the Cytoplasmic side of the membrane.

It belongs to the alphavirus structural polyprotein family. In terms of assembly, homodimer. Homomultimer. Interacts with host karyopherin KPNA4; this interaction allows the nuclear import of the viral capsid protein. Interacts with spike glycoprotein E2. Interacts with host IRAK1; the interaction leads to inhibition of IRAK1-dependent signaling. As to quaternary structure, the precursor of protein E3/E2 and E1 form a heterodimer shortly after synthesis. Interacts with spike glycoprotein E2. The precursor of protein E3/E2 and E1 form a heterodimer shortly after synthesis. Processing of the precursor of protein E3/E2 into E2 and E3 results in a heterodimer of the spike glycoproteins E2 and E1. Spike at virion surface are constituted of three E2-E1 heterodimers. After target cell attachment and endocytosis, E1 changes conformation to form homotrimers. Interacts with 6K protein. Interacts with host MXRA8; this interaction mediates virus entry. The interaction involves 2 adjacent E2-E1 heterodimers. In terms of assembly, interacts with spike glycoprotein E1. Processing of the precursor of protein E3/E2 into E2 and E3 results in a heterodimer of the spike glycoproteins E2 and E1. Spike at virion surface are constituted of a trimer of E2-E1 heterodimers. Interacts with 6K protein. Interacts with host MXRA8; this interaction mediates virus entry. The interaction involves 2 adjacent E2-E1 heterodimers. As to quaternary structure, oligomer. Interacts with spike glycoprotein E1. Interacts with spike glycoprotein E2. Post-translationally, specific enzymatic cleavages in vivo yield mature proteins. Capsid protein is auto-cleaved during polyprotein translation, unmasking a signal peptide at the N-terminus of the precursor of E3/E2. The remaining polyprotein is then targeted to the host endoplasmic reticulum, where host signal peptidase cleaves it into pE2, 6K and E1 proteins. pE2 is further processed to mature E3 and E2 by host furin in trans-Golgi vesicle. In terms of processing, palmitoylated via thioester bonds. These palmitoylations may induce disruption of the C-terminus transmembrane. This would result in the reorientation of E2 C-terminus from lumenal to cytoplasmic side. N-glycosylated. Post-translationally, palmitoylated via thioester bonds.

It is found in the virion. It localises to the host cytoplasm. The protein resides in the host cell membrane. The protein localises to the host nucleus. Its subcellular location is the virion membrane. It is found in the host Golgi apparatus. It localises to the host trans-Golgi network. The protein resides in the host endoplasmic reticulum. It carries out the reaction Autocatalytic release of the core protein from the N-terminus of the togavirus structural polyprotein by hydrolysis of a -Trp-|-Ser- bond.. In terms of biological role, forms an icosahedral capsid with a T=4 symmetry composed of 240 copies of the capsid protein surrounded by a lipid membrane through which penetrate 80 spikes composed of trimers of E1-E2 heterodimers. The capsid protein binds to the viral RNA genome at a site adjacent to a ribosome binding site for viral genome translation following genome release. Possesses a protease activity that results in its autocatalytic cleavage from the nascent structural protein. Following its self-cleavage, the capsid protein transiently associates with ribosomes, and within several minutes the protein binds to viral RNA and rapidly assembles into icosahedric core particles. The resulting nucleocapsid eventually associates with the cytoplasmic domain of the spike glycoprotein E2 at the cell membrane, leading to budding and formation of mature virions. In case of infection, new virions attach to target cells and after clathrin-mediated endocytosis their membrane fuses with the host endosomal membrane. This leads to the release of the nucleocapsid into the cytoplasm, followed by an uncoating event necessary for the genomic RNA to become accessible. The uncoating might be triggered by the interaction of capsid proteins with ribosomes. Binding of ribosomes would release the genomic RNA since the same region is genomic RNA-binding and ribosome-binding. Specifically inhibits interleukin-1 receptor-associated kinase 1/IRAK1-dependent signaling during viral entry, representing a means by which the alphaviruses may evade innate immune detection and activation prior to viral gene expression. Degrades host cyclic GMP-AMP synthase (CGAS) thereby inhibiting the cGAS-STING pathway. Provides the signal sequence for the translocation of the precursor of protein E3/E2 to the host endoplasmic reticulum. Furin-cleaved E3 remains associated with spike glycoprotein E1 and mediates pH protection of the latter during the transport via the secretory pathway. After virion release from the host cell, the assembly protein E3 is gradually released in the extracellular space. Its function is as follows. Plays a role in viral attachment to target host cell, by binding to the cell receptor MXRA8. Synthesized as a p62 precursor which is processed by furin at the cell membrane just before virion budding, giving rise to E2-E1 heterodimer. The p62-E1 heterodimer is stable, whereas E2-E1 is unstable and dissociate at low pH. p62 is processed at the last step, presumably to avoid E1 fusion activation before its final export to cell surface. E2 C-terminus contains a transitory transmembrane that would be disrupted by palmitoylation, resulting in reorientation of the C-terminal tail from lumenal to cytoplasmic side. This step is critical since E2 C-terminus is involved in budding by interacting with capsid proteins. This release of E2 C-terminus in cytoplasm occurs lately in protein export, and precludes premature assembly of particles at the endoplasmic reticulum membrane. Functionally, acts as a viroporin that participates in virus glycoprotein processing and transport to the plasma membrane, cell permeabilization and budding of viral particles. Disrupts the calcium homeostasis of the cell, probably at the endoplasmic reticulum level. This leads to cytoplasmic calcium elevation. Because of its lipophilic properties, the 6K protein is postulated to influence the selection of lipids that interact with the transmembrane domains of the glycoproteins, which, in turn, affects the deformability of the bilayer required for the extreme curvature that occurs as budding proceeds. Present in low amount in virions, about 3% compared to viral glycoproteins. In terms of biological role, class II viral fusion protein. Fusion activity is inactive as long as E1 is bound to E2 in mature virion. After virus attachment to target cell and endocytosis, acidification of the endosome induce dissociation of E1/E2 heterodimer and concomitant trimerization of the E1 subunits. This E1 trimer is fusion active, and promotes release of viral nucleocapsid in cytoplasm after endosome and viral membrane fusion. Efficient fusion requires the presence of cholesterol and sphingolipid in the target membrane. The polypeptide is Structural polyprotein (Chikungunya virus (strain S27-African prototype) (CHIKV)).